We begin with the raw amino-acid sequence, 252 residues long: Imidazole glycerol phosphate synthase subunit HisF (252 aa).

Active-site residues include D11 and D130.

This sequence belongs to the HisA/HisF family. In terms of assembly, heterodimer of HisH and HisF.

The protein resides in the cytoplasm. It carries out the reaction 5-[(5-phospho-1-deoxy-D-ribulos-1-ylimino)methylamino]-1-(5-phospho-beta-D-ribosyl)imidazole-4-carboxamide + L-glutamine = D-erythro-1-(imidazol-4-yl)glycerol 3-phosphate + 5-amino-1-(5-phospho-beta-D-ribosyl)imidazole-4-carboxamide + L-glutamate + H(+). It participates in amino-acid biosynthesis; L-histidine biosynthesis; L-histidine from 5-phospho-alpha-D-ribose 1-diphosphate: step 5/9. Its function is as follows. IGPS catalyzes the conversion of PRFAR and glutamine to IGP, AICAR and glutamate. The HisF subunit catalyzes the cyclization activity that produces IGP and AICAR from PRFAR using the ammonia provided by the HisH subunit. The polypeptide is Imidazole glycerol phosphate synthase subunit HisF (Lactiplantibacillus plantarum (strain ATCC BAA-793 / NCIMB 8826 / WCFS1) (Lactobacillus plantarum)).